The following is a 405-amino-acid chain: Deoxyguanosinetriphosphate triphosphohydrolase-like protein (405 aa).

The 145-residue stretch at 75–219 folds into the HD domain; the sequence is RLTHTIEVAQ…AAIADDIAYN (145 aa).

Belongs to the dGTPase family. Type 2 subfamily.

This is Deoxyguanosinetriphosphate triphosphohydrolase-like protein from Rhizobium etli (strain CIAT 652).